The sequence spans 309 residues: Extracellular agarase (309 aa).

Residues 1–30 (MVNRRDLIKWSAVALGAGAGLAGPAPAAHA) constitute a signal peptide (tat-type signal). In terms of domain architecture, GH16 spans 33–309 (LEWEQYPVPA…YRWVRTYQAV (277 aa)). Glu155 functions as the Nucleophile in the catalytic mechanism. The active-site Proton donor is the Glu160.

Belongs to the glycosyl hydrolase 16 family. In terms of processing, predicted to be exported by the Tat system. The position of the signal peptide cleavage has been experimentally proven.

The protein localises to the secreted. It catalyses the reaction Hydrolysis of (1-&gt;4)-beta-D-galactosidic linkages in agarose, giving the tetramer as the predominant product.. The sequence is that of Extracellular agarase (dagA) from Streptomyces coelicolor (strain ATCC BAA-471 / A3(2) / M145).